The sequence spans 112 residues: MSAQSAVGSIETIGFPGILAAADAMVKAGRITIVGYIRAGSARFTLNIRGDVQEVKTAMAAGIDAINRTEGADVKTWVIIPRPHENVVAVLPIDFSPEVEPFREAAEGLNRR.

A BMC domain is found at 6 to 92 (AVGSIETIGF…PHENVVAVLP (87 aa)).

This sequence belongs to the bacterial microcompartments protein family. CcmK subfamily. In terms of assembly, homohexamer. Interacts with full-length CcmM. Forms mixed heterohexamers with CcmK3, probably with 1:5 CcmK3:CcmK4 stoichiometry. Only very weak interactions with CcmK1 and CcmK2 were seen.

It is found in the carboxysome. In terms of biological role, a probably minor shell protein component of the carboxysome, a polyhedral inclusion where RuBisCO (ribulose bisphosphate carboxylase, rbcL-rbcS) is sequestered. The central pore probably regulates metabolite flux, as might the gaps between assembled homohexamers. Homohexamers make sheets that probably form the facets of the polyhedral carboxysome. This subunit probably makes both homohexamers and heterohexamers with CcmK3. This Synechocystis sp. (strain ATCC 27184 / PCC 6803 / Kazusa) protein is Carboxysome shell protein CcmK4.